The primary structure comprises 40 residues: Photosystem II reaction center protein J (40 aa).

Residues 8–28 (IPLWMIGTLAGILVISLIGIF) traverse the membrane as a helical segment.

The protein belongs to the PsbJ family. As to quaternary structure, PSII is composed of 1 copy each of membrane proteins PsbA, PsbB, PsbC, PsbD, PsbE, PsbF, PsbH, PsbI, PsbJ, PsbK, PsbL, PsbM, PsbT, PsbX, PsbY, PsbZ, Psb30/Ycf12, at least 3 peripheral proteins of the oxygen-evolving complex and a large number of cofactors. It forms dimeric complexes.

It localises to the plastid membrane. Its function is as follows. One of the components of the core complex of photosystem II (PSII). PSII is a light-driven water:plastoquinone oxidoreductase that uses light energy to abstract electrons from H(2)O, generating O(2) and a proton gradient subsequently used for ATP formation. It consists of a core antenna complex that captures photons, and an electron transfer chain that converts photonic excitation into a charge separation. This is Photosystem II reaction center protein J from Cuscuta gronovii (Common dodder).